Reading from the N-terminus, the 158-residue chain is RNA pyrophosphohydrolase (158 aa).

The 143-residue stretch at 9–151 (PLRNGVGIVV…KLHVYKDVKE (143 aa)) folds into the Nudix hydrolase domain. A Nudix box motif is present at residues 43 to 64 (GGVDKGEDYLTAAYRELEEETS).

The protein belongs to the Nudix hydrolase family. RppH subfamily. The cofactor is a divalent metal cation.

Functionally, accelerates the degradation of transcripts by removing pyrophosphate from the 5'-end of triphosphorylated RNA, leading to a more labile monophosphorylated state that can stimulate subsequent ribonuclease cleavage. This Pelagibacter ubique (strain HTCC1062) protein is RNA pyrophosphohydrolase.